A 366-amino-acid chain; its full sequence is Purple acid phosphatase 3 (366 aa).

The first 32 residues, 1-32 (MTYIYRDTKITTKSTIPFLIFFLFCFSNLSMA), serve as a signal peptide directing secretion. Fe cation is bound at residue D81. An N-linked (GlcNAc...) asparagine glycan is attached at N89. The Fe cation site is built by D114 and Y117. D114 is a Zn(2+) binding site. 2 residues coordinate Zn(2+): N152 and H246. The Proton donor role is filled by H255. H281 serves as a coordination point for Zn(2+). A substrate-binding site is contributed by 281–283 (HDH). H283 lines the Fe cation pocket.

Belongs to the metallophosphoesterase superfamily. Purple acid phosphatase family. In terms of assembly, homodimer. Fe cation is required as a cofactor. Zn(2+) serves as cofactor. As to expression, expressed in stems, leaves, flowers and siliques.

The protein resides in the secreted. It carries out the reaction a phosphate monoester + H2O = an alcohol + phosphate. In Arabidopsis thaliana (Mouse-ear cress), this protein is Purple acid phosphatase 3 (PAP3).